Consider the following 298-residue polypeptide: TLR adapter interacting with SLC15A4 on the lysosome (298 aa).

Positions 287 to 291 (SLHIS) match the pLxIS motif motif. S291 carries the post-translational modification Phosphoserine.

Interacts (via pLxIS motif) with IRF5; leading to IRF5 activation. Interacts with SLC15A4; leading to its recruitment to endolysosome. The phosphorylated pLxIS motif constitutes an IRF5-binding motif, leading to recruitment of the transcription factor IRF5 to induce type-I interferons and other cytokines.

It localises to the lysosome membrane. The protein resides in the endosome membrane. It is found in the nucleus. Its subcellular location is the cytoplasm. In terms of biological role, innate immune adapter that mediates the recruitment and activation of IRF5 downstream of endolysosomal toll-like receptors TLR7, TLR8 and TLR9. Following recruitment to endolysosome by SLC15A4 downstream of TLR7, TLR8 and TLR9, specifically recruits IRF5 transcription factor via its pLxIS motif, leading to IRF5 activation and subsequent expression of type I interferons. Plays a role in the regulation of endolysosomal pH in immune cells such as B-cells, dendritic cells and monocytes. The polypeptide is TLR adapter interacting with SLC15A4 on the lysosome (Mus musculus (Mouse)).